We begin with the raw amino-acid sequence, 217 residues long: Enoyl-CoA-hydratase (217 aa).

It belongs to the enoyl-CoA hydratase/isomerase family.

It catalyses the reaction a (3S)-3-hydroxyacyl-CoA = a (2E)-enoyl-CoA + H2O. It carries out the reaction a 4-saturated-(3S)-3-hydroxyacyl-CoA = a (3E)-enoyl-CoA + H2O. The protein operates within antibiotic biosynthesis; vancomycin biosynthesis. Involved in the biosynthesis of the nonproteinogenic amino acid monomer (S)-3,5-dihydroxyphenylglycine (Dpg) responsible of the production of vancomycin and teicoplanin antibiotics. Catalyzes the syn-addition of a water molecule across the double bond of a trans-2-enoyl-CoA thioester, resulting in the formation of a beta-hydroxyacyl-CoA thioester. Physiologically, DpgB could act as a dehydratase, facilitating the aromatization of the DPA-S-DgpA or DPA-S-CoA intermediate. The sequence is that of Enoyl-CoA-hydratase (dpgB) from Amycolatopsis orientalis (Nocardia orientalis).